Here is a 161-residue protein sequence, read N- to C-terminus: Anthrone oxygenase tpcL (161 aa).

The N-linked (GlcNAc...) asparagine glycan is linked to asparagine 4. 4 consecutive transmembrane segments (helical) span residues 15–35 (VITGSFLSGLMMGLSVVDIPV), 56–74 (IGHKMMPSLAVTTCLLYGY), 87–107 (LPHIIAAVTTISMVPFTWLVM), and 136–155 (WAQLHAVRSLFPLMGSVLGL).

This sequence belongs to the anthrone oxygenase family. Specifically expressed in conidia.

It localises to the membrane. The enzyme catalyses emodin anthrone + O2 = emodin + H2O + H(+). Its pathway is secondary metabolite biosynthesis. Its function is as follows. Anthrone oxygenase; part of the gene cluster that mediates the biosynthesis of trypacidin, a mycotoxin with antiprotozoal activity and that plays a role in the infection process. The pathway begins with the synthesis of atrochrysone thioester by the polyketide synthase (PKS) tpcC. The atrochrysone carboxyl ACP thioesterase tpcB then breaks the thioester bond and releases the atrochrysone carboxylic acid from tpcC. The decarboxylase tpcK converts atrochrysone carboxylic acid to atrochrysone which is further reduced into emodin anthrone. The next step is performed by the emodin anthrone oxygenase tpcL that catalyzes the oxidation of emodinanthrone to emodin. Emodin O-methyltransferase encoded by tpcA catalyzes methylation of the 8-hydroxy group of emodin to form questin. Ring cleavage of questin by questin oxidase tpcI leads to desmethylsulochrin via several intermediates including questin epoxide. Another methylation step catalyzed by tpcM leads to the formation of sulochrin which is further converted to monomethylsulfochrin by tpcH. Finally, the tpcJ catalyzes the conversion of monomethylsulfochrin to trypacidin. Trypacidin is toxic for human pulmonary and bronchial epithelial cells by initiating the intracellular formation of nitric oxide (NO) and hydrogen peroxide (H(2)O(2)), thus triggering host necrotic cell death. The trypacidin pathway is also able to produce endocrocin via a distinct route from the endocrocin Enc pathway. This Aspergillus fumigatus (strain ATCC MYA-4609 / CBS 101355 / FGSC A1100 / Af293) (Neosartorya fumigata) protein is Anthrone oxygenase tpcL.